Consider the following 506-residue polypeptide: Maturase K (506 aa).

The protein belongs to the intron maturase 2 family. MatK subfamily.

Its subcellular location is the plastid. It localises to the chloroplast. Functionally, usually encoded in the trnK tRNA gene intron. Probably assists in splicing its own and other chloroplast group II introns. The polypeptide is Maturase K (Artanema fimbriatum).